Consider the following 687-residue polypeptide: Polyphosphate kinase (687 aa).

Residue N45 coordinates ATP. 2 residues coordinate Mg(2+): R375 and R405. H435 functions as the Phosphohistidine intermediate in the catalytic mechanism. Residues Y472, R568, and H596 each contribute to the ATP site.

This sequence belongs to the polyphosphate kinase 1 (PPK1) family. It depends on Mg(2+) as a cofactor. In terms of processing, an intermediate of this reaction is the autophosphorylated ppk in which a phosphate is covalently linked to a histidine residue through a N-P bond.

It catalyses the reaction [phosphate](n) + ATP = [phosphate](n+1) + ADP. Its function is as follows. Catalyzes the reversible transfer of the terminal phosphate of ATP to form a long-chain polyphosphate (polyP). The protein is Polyphosphate kinase of Burkholderia cenocepacia (strain HI2424).